Reading from the N-terminus, the 240-residue chain is HTH-type transcriptional repressor STM4068 (240 aa).

The HTH gntR-type domain maps to T9–V77. The segment at residues Q37–S56 is a DNA-binding region (H-T-H motif).

Functionally, represses the expression of the STM4065-STM4067 operon. This chain is HTH-type transcriptional repressor STM4068, found in Salmonella typhimurium (strain LT2 / SGSC1412 / ATCC 700720).